Consider the following 1375-residue polypeptide: DNA-directed RNA polymerase subunit beta' (1375 aa).

The unknown stretch occupies residues 1-158 (MAKNEVLSLP…RVNKIIQPIR (158 aa)). The interval 159–1353 (KTYGSKAFTH…GGLIPAGTGI (1195 aa)) is DNA-directed RNA polymerase subunit beta'. Zn(2+)-binding residues include cysteine 219, cysteine 221, cysteine 233, and cysteine 236. Mg(2+)-binding residues include aspartate 607, aspartate 609, and aspartate 611.

The protein belongs to the RNA polymerase beta' chain family. In terms of assembly, the RNAP catalytic core consists of 2 alpha, 1 beta, 1 beta' and 1 omega subunit. When a sigma factor is associated with the core the holoenzyme is formed, which can initiate transcription. The cofactor is Mg(2+). Zn(2+) serves as cofactor.

It carries out the reaction RNA(n) + a ribonucleoside 5'-triphosphate = RNA(n+1) + diphosphate. DNA-dependent RNA polymerase catalyzes the transcription of DNA into RNA using the four ribonucleoside triphosphates as substrates. This is DNA-directed RNA polymerase subunit beta' from Acholeplasma laidlawii (strain PG-8A).